Here is a 383-residue protein sequence, read N- to C-terminus: MNLIPEILDLQGEFEKIRHQIHENPELGFDELCTAKLVAQKLKEFGYEVYEEIGKTGVVGVLKKGNSDKKIGLRADMDALPLQECTNLPYKSKKENVMHACGHDGHTTSLLLAAKYLASQNFNGALNLYFQPAEEGLGGAKAMIEDGLFEKFDSDYVFGWHNMPFGSDKKFYLKKGAMMASSDSYSIEVIGRGGHGSAPEKAKDPIYAASLLIVALQSIVSRNVDPQNSAVVSIGAFNAGHAFNIIPDIATIKMSVRALDNETRKLTEEKIYKICKGIAQANDIEIKINKNVVAPVTMNNDEAVDFASEVAKELFGEKNCEFNHRPLMASEDFGFFCEMKKCAYAFLENENDIYLHNSSYVFNDKLLARAASYYAKLALKYLK.

Belongs to the peptidase M20 family.

It catalyses the reaction N-benzoylglycine + H2O = benzoate + glycine. Cleaves hippuric acid into benzoic acid and glycine. The polypeptide is Hippurate hydrolase (Campylobacter jejuni subsp. jejuni serotype O:2 (strain ATCC 700819 / NCTC 11168)).